A 327-amino-acid polypeptide reads, in one-letter code: Dipeptide transport ATP-binding protein DppD (327 aa).

Residues 4-254 (LNVDKLSVHF…PRHPYTQALL (251 aa)) form the ABC transporter domain. Residue 40–47 (GESGSGKS) coordinates ATP.

This sequence belongs to the ABC transporter superfamily. As to quaternary structure, the complex is composed of two ATP-binding proteins (DppD and DppF), two transmembrane proteins (DppB and DppC) and a solute-binding protein (DppA). MppA can replace DppA as binding protein for heme and ALA transport.

Its subcellular location is the cell inner membrane. The enzyme catalyses a dipeptide(out) + ATP + H2O = a dipeptide(in) + ADP + phosphate + H(+). Part of the ABC transporter DppABCDF involved in dipeptide transport. Responsible for energy coupling to the transport system. In terms of biological role, when a foreign outer membrane heme receptor is expressed in E.coli, DppABCDF can also transport heme and its precursor, 5-aminolevulinic acid (ALA), from the periplasm into the cytoplasm. The sequence is that of Dipeptide transport ATP-binding protein DppD (dppD) from Escherichia coli (strain K12).